The chain runs to 243 residues: Transcription factor TFIIS homolog (243 aa).

Positions 77–201 constitute a TFIIS central domain; that stretch reads MRDIIQMMFF…SQQKVAEKTS (125 aa). A TFIIS-type zinc finger spans residues 202-242; it reads QLYKCPNCKQRMCTYREVQTRALDEPSTIFCTCKKCGHEFI. Positions 206, 209, 234, and 237 each coordinate Zn(2+).

This sequence belongs to the TFS-II family.

In terms of biological role, putative initiation factor. Necessary for efficient transcription elongation past template-encoded arresting sites. This is Transcription factor TFIIS homolog from Ornithodoros (relapsing fever ticks).